A 148-amino-acid chain; its full sequence is Snaclec 3 (148 aa).

The signal sequence occupies residues 1–23; that stretch reads MGRFISVSFGLLVVFLSLSGTEA. 3 cysteine pairs are disulfide-bonded: C27-C38, C55-C144, and C121-C136. Residues 34 to 145 enclose the C-type lectin domain; it reads YDQNCYKVFT…CSSTHNFVCK (112 aa).

This sequence belongs to the snaclec family. Heterodimer; disulfide-linked.

It localises to the secreted. Its function is as follows. Interferes with one step of hemostasis (modulation of platelet aggregation, or coagulation cascade, for example). This is Snaclec 3 from Daboia siamensis (Eastern Russel's viper).